Reading from the N-terminus, the 170-residue chain is Cyclic pyranopterin monophosphate synthase (170 aa).

Substrate-binding positions include 89-91 (LCH) and 125-126 (ME). Residue Asp140 is part of the active site.

Belongs to the MoaC family. In terms of assembly, homohexamer; trimer of dimers.

The enzyme catalyses (8S)-3',8-cyclo-7,8-dihydroguanosine 5'-triphosphate = cyclic pyranopterin phosphate + diphosphate. It participates in cofactor biosynthesis; molybdopterin biosynthesis. Its function is as follows. Catalyzes the conversion of (8S)-3',8-cyclo-7,8-dihydroguanosine 5'-triphosphate to cyclic pyranopterin monophosphate (cPMP). This Streptomyces coelicolor (strain ATCC BAA-471 / A3(2) / M145) protein is Cyclic pyranopterin monophosphate synthase.